We begin with the raw amino-acid sequence, 620 residues long: Long-chain fatty acid transport protein 2 (620 aa).

The Lumenal portion of the chain corresponds to 1–4; it reads MLSA. A helical transmembrane segment spans residues 5 to 27; it reads IYTVLAGLLFLPLLVNLCCPYFF. Residues 28 to 106 lie on the Cytoplasmic side of the membrane; that stretch reads QDIGYFLKVA…DHLGLRQGDC (79 aa). A helical transmembrane segment spans residues 107–127; it reads VALLMGNEPAYVWLWLGLVKL. Residues 128 to 261 are Lumenal-facing; the sequence is GCAMACLNYN…SGLKADDVIY (134 aa). 222-233 serves as a coordination point for AMP; it reads YIYTSGTTGLPK. The chain crosses the membrane as a helical span at residues 262–282; that stretch reads ITLPFYHSAALLIGIHGCIVA. At 283 to 620 the chain is on the cytoplasmic side; sequence GATLALRTKF…NAISAKTLKL (338 aa). The residue at position 291 (K291) is an N6-acetyllysine. T577 is modified (phosphothreonine).

Belongs to the ATP-dependent AMP-binding enzyme family. Expressed in liver, kidney, placenta, intestine, brain, heart, and colon. Predominantly expressed in liver. In terms of tissue distribution, expressed in liver, placenta, and intestine, but much lower relative to isoform 1.

It localises to the endoplasmic reticulum membrane. Its subcellular location is the peroxisome membrane. It is found in the cell membrane. The protein resides in the microsome. The enzyme catalyses a fatty acid(in) = a fatty acid(out). It carries out the reaction (9Z)-octadecenoate(out) = (9Z)-octadecenoate(in). The catalysed reaction is a long-chain fatty acid + ATP + CoA = a long-chain fatty acyl-CoA + AMP + diphosphate. It catalyses the reaction (5Z,8Z,11Z,14Z)-eicosatetraenoate + ATP + CoA = (5Z,8Z,11Z,14Z)-eicosatetraenoyl-CoA + AMP + diphosphate. The enzyme catalyses hexadecanoate + ATP + CoA = hexadecanoyl-CoA + AMP + diphosphate. It carries out the reaction (9Z)-octadecenoate + ATP + CoA = (9Z)-octadecenoyl-CoA + AMP + diphosphate. The catalysed reaction is 3,7,11,15-tetramethylhexadecanoate + ATP + CoA = phytanoyl-CoA + AMP + diphosphate. It catalyses the reaction (9Z,12Z,15Z)-octadecatrienoate + ATP + CoA = (9Z,12Z,15Z)-octadecatrienoyl-CoA + AMP + diphosphate. The enzyme catalyses 2,6,10,14-tetramethylpentadecanoate + ATP + CoA = pristanoyl-CoA + AMP + diphosphate. It carries out the reaction (E)-hexadec-2-enoate + ATP + CoA = (2E)-hexadecenoyl-CoA + AMP + diphosphate. The catalysed reaction is a very long-chain fatty acid + ATP + CoA = a very long-chain fatty acyl-CoA + AMP + diphosphate. It catalyses the reaction tetracosanoate + ATP + CoA = tetracosanoyl-CoA + AMP + diphosphate. The enzyme catalyses (4Z,7Z,10Z,13Z,16Z,19Z)-docosahexaenoate + ATP + CoA = (4Z,7Z,10Z,13Z,16Z,19Z)-docosahexaenoyl-CoA + AMP + diphosphate. It carries out the reaction (25R)-3alpha,7alpha,12alpha-trihydroxy-5beta-cholestan-26-oate + ATP + CoA = (25R)-3alpha,7alpha,12alpha-trihydroxy-5beta-cholestan-26-oyl-CoA + AMP + diphosphate. Mediates the import of long-chain fatty acids (LCFA) into the cell by facilitating their transport across cell membranes, playing an important role in hepatic fatty acid uptake. Also functions as an acyl-CoA ligase catalyzing the ATP-dependent formation of fatty acyl-CoA using LCFA and very-long-chain fatty acids (VLCFA) as substrates, which prevents fatty acid efflux from cells and might drive more fatty acid uptake. Plays a pivotal role in regulating available LCFA substrates from exogenous sources in tissues undergoing high levels of beta-oxidation or triglyceride synthesis. Can also activate branched-chain fatty acids such as phytanic acid and pristanic acid. May contribute to the synthesis of sphingosine-1-phosphate. Does not activate C24 bile acids, cholate and chenodeoxycholate. In vitro, activates 3-alpha,7-alpha,12-alpha-trihydroxy-5-beta-cholestanate (THCA), the C27 precursor of cholic acid deriving from the de novo synthesis from cholesterol. However, it is not critical for THCA activation and bile synthesis in vivo. Functionally, exhibits both long-chain fatty acids (LCFA) transport activity and acyl CoA synthetase towards very long-chain fatty acids. Shows a preference for generating CoA derivatives of n-3 fatty acids, which are preferentially trafficked into phosphatidylinositol. Its function is as follows. Exhibits long-chain fatty acids (LCFA) transport activity but lacks acyl CoA synthetase towards very long-chain fatty acids. This chain is Long-chain fatty acid transport protein 2 (SLC27A2), found in Homo sapiens (Human).